An 824-amino-acid polypeptide reads, in one-letter code: Vesicle-fusing ATPase (824 aa).

ATP contacts are provided by residues 582–587 (RGMIVW) and 622–629 (AKTGKTSL). T627 provides a ligand contact to Mg(2+).

Belongs to the AAA ATPase family. Homohexamer. It depends on Mg(2+) as a cofactor.

The protein resides in the cytoplasm. It carries out the reaction ATP + H2O = ADP + phosphate + H(+). Required for vesicle-mediated transport. Catalyzes the fusion of transport vesicles within the Golgi cisternae. Is also required for transport from the endoplasmic reticulum to the Golgi stack. Seems to function as a fusion protein required for the delivery of cargo proteins to all compartments of the Golgi stack independent of vesicle origin. In Caenorhabditis elegans, this protein is Vesicle-fusing ATPase (nsf-1).